The sequence spans 480 residues: Glycogen synthase (480 aa).

Lys-15 serves as a coordination point for ADP-alpha-D-glucose.

The protein belongs to the glycosyltransferase 1 family. Bacterial/plant glycogen synthase subfamily.

It carries out the reaction [(1-&gt;4)-alpha-D-glucosyl](n) + ADP-alpha-D-glucose = [(1-&gt;4)-alpha-D-glucosyl](n+1) + ADP + H(+). The protein operates within glycan biosynthesis; glycogen biosynthesis. Synthesizes alpha-1,4-glucan chains using ADP-glucose. In Rhizobium tropici, this protein is Glycogen synthase.